The sequence spans 349 residues: MSNNDFLVLKNVTKAFGKAVVIDNLDLSIKRGTMVTLLGPSGCGKTTVLRLVAGLESPTSGQIFIDGEDVTKSSIQNRDICIVFQSYALFPHMSIGDNVGYGLKMQGVSKEERAKRVKEALELVDLAGFEDRYVDQISGGQQQRVALARALVLKPKVLLFDEPLSNLDANLRRSMREKIRELQQRLGITSLYVTHDQTEAFAVSDEVIVMHKGKIMQKAPAKELYLRPNSLFLANFMGESSIFQGTLQQDQVTVNGYQFKLNNAAQFGLTDGACLVGIRPEAISFKETGEAAQRCSIKSAVYMGNHWEIVANWGGQDLLVNTNPEQFNPELKEAYVHLAEHGVFLLKPE.

The ABC transporter domain occupies 7–237; sequence LVLKNVTKAF…PNSLFLANFM (231 aa). 39 to 46 contacts ATP; that stretch reads GPSGCGKT.

This sequence belongs to the ABC transporter superfamily. Fe(3+) ion importer (TC 3.A.1.10) family. As to quaternary structure, the complex is composed of two ATP-binding proteins (FbpC), two transmembrane proteins (FbpB) and a solute-binding protein (FbpA).

Its subcellular location is the cell inner membrane. The catalysed reaction is Fe(3+)(out) + ATP + H2O = Fe(3+)(in) + ADP + phosphate + H(+). Its function is as follows. Part of the ABC transporter complex FbpABC involved in Fe(3+) ions import. Responsible for energy coupling to the transport system. This chain is Fe(3+) ions import ATP-binding protein FbpC, found in Pasteurella multocida (strain Pm70).